Here is an 87-residue protein sequence, read N- to C-terminus: Defensin-like protein 218 (87 aa).

Residues 1-19 (MKTIVCFLTILILVSSCES) form the signal peptide. 3 disulfide bridges follow: Cys51–Cys70, Cys54–Cys75, and Cys58–Cys77.

The protein belongs to the DEFL family.

The protein localises to the secreted. The chain is Defensin-like protein 218 from Arabidopsis thaliana (Mouse-ear cress).